The sequence spans 570 residues: Proline--tRNA ligase (570 aa).

Belongs to the class-II aminoacyl-tRNA synthetase family. ProS type 1 subfamily. In terms of assembly, homodimer.

It is found in the cytoplasm. The enzyme catalyses tRNA(Pro) + L-proline + ATP = L-prolyl-tRNA(Pro) + AMP + diphosphate. Catalyzes the attachment of proline to tRNA(Pro) in a two-step reaction: proline is first activated by ATP to form Pro-AMP and then transferred to the acceptor end of tRNA(Pro). As ProRS can inadvertently accommodate and process non-cognate amino acids such as alanine and cysteine, to avoid such errors it has two additional distinct editing activities against alanine. One activity is designated as 'pretransfer' editing and involves the tRNA(Pro)-independent hydrolysis of activated Ala-AMP. The other activity is designated 'posttransfer' editing and involves deacylation of mischarged Ala-tRNA(Pro). The misacylated Cys-tRNA(Pro) is not edited by ProRS. This is Proline--tRNA ligase from Clostridium acetobutylicum (strain ATCC 824 / DSM 792 / JCM 1419 / IAM 19013 / LMG 5710 / NBRC 13948 / NRRL B-527 / VKM B-1787 / 2291 / W).